A 321-amino-acid chain; its full sequence is Probable arabinan endo-1,5-alpha-L-arabinosidase A (321 aa).

An N-terminal signal peptide occupies residues 1–19; sequence MSASAFVAVASCLAALVHG. Catalysis depends on Asp34, which acts as the Proton acceptor. Glu200 serves as the catalytic Proton donor.

It belongs to the glycosyl hydrolase 43 family.

Its subcellular location is the secreted. It catalyses the reaction Endohydrolysis of (1-&gt;5)-alpha-arabinofuranosidic linkages in (1-&gt;5)-arabinans.. It functions in the pathway glycan metabolism; L-arabinan degradation. Its function is as follows. Endo-1,5-alpha-L-arabinanase involved in degradation of pectin. Its preferred substrate is linear 1,5-alpha-L-arabinan. The chain is Probable arabinan endo-1,5-alpha-L-arabinosidase A (abnA) from Neosartorya fischeri (strain ATCC 1020 / DSM 3700 / CBS 544.65 / FGSC A1164 / JCM 1740 / NRRL 181 / WB 181) (Aspergillus fischerianus).